The sequence spans 1321 residues: Insulin receptor substrate 2 (1321 aa).

Residues 1–10 (MASAPLPGPP) show a composition bias toward pro residues. 2 disordered regions span residues 1 to 32 (MASA…HSVR) and 51 to 73 (RGPG…PPRL). The PH domain maps to 16–144 (DGPNLNNNNN…WYRALTDLVS (129 aa)). Positions 18–28 (PNLNNNNNNNN) are enriched in low complexity. The region spanning 191–295 (YREVWQVNLK…EAMKALKELF (105 aa)) is the IRS-type PTB domain. Positions 299 to 536 (PRSKSQSSGS…ARDGSGGELY (238 aa)) are disordered. A phosphoserine mark is found at Ser-303 and Ser-343. At Thr-347 the chain carries Phosphothreonine. Position 362 is a phosphoserine (Ser-362). The span at 364–376 (GDGGAAGGAGTAG) shows a compositional bias: gly residues. 3 positions are modified to phosphoserine: Ser-381, Ser-385, and Ser-388. Arg-409 bears the Omega-N-methylarginine mark. 2 stretches are compositionally biased toward low complexity: residues 435–456 (SPPA…SGSY) and 478–490 (PSSG…GSPS). At Thr-517 the chain carries Phosphothreonine. Ser-520 is subject to Phosphoserine. The residue at position 524 (Thr-524) is a Phosphothreonine. Tyr-536 carries the phosphotyrosine; by INSR modification. The YXXM motif 1 signature appears at 536–539 (YGYM). Ser-556 is modified (phosphoserine; by PLK1). Ser-573 bears the Phosphoserine mark. Phosphothreonine is present on residues Thr-575 and Thr-576. Position 590 is a phosphoserine (Ser-590). The YXXM motif 2 motif lies at 594–597 (YTLM). Residues Ser-604 and Ser-616 each carry the phosphoserine modification. Residue Tyr-649 is modified to Phosphotyrosine. Short sequence motifs (YXXM motif) lie at residues 649–652 (YMPM) and 671–674 (YMPM). A Phosphotyrosine; by INSR modification is found at Tyr-671. 4 positions are modified to phosphoserine: Ser-675, Ser-678, Ser-727, and Ser-728. The short motif at 734–737 (YMRM) is the YXXM motif 5 element. The residue at position 762 (Ser-762) is a Phosphoserine. Thr-771 is subject to Phosphothreonine. Ser-796 carries the post-translational modification Phosphoserine. The YXXM motif 6 motif lies at 814 to 817 (YVLM). Phosphoserine is present on Ser-819. Disordered stretches follow at residues 834–871 (ATPG…RPEG) and 888–1091 (EGLQ…ASPT). A Phosphoserine modification is found at Ser-907. Phosphotyrosine; by INSR is present on Tyr-911. A compositionally biased stretch (low complexity) spans 930–959 (LLASAASSSSLLSASSPASSLGSGTPGTSS). Residue Ser-965 is modified to Phosphoserine. Tyr-970 is subject to Phosphotyrosine; by INSR. The segment covering 1005 to 1014 (PYPPLPPRPS) has biased composition (pro residues). A compositionally biased stretch (polar residues) spans 1039–1055 (AATSQGPTAGSSMSSEP). The short motif at 1061–1064 (YTEM) is the YXXM motif 7 element. Thr-1071 carries the post-translational modification Phosphothreonine. The span at 1072-1082 (PPQPIVAPPKP) shows a compositional bias: pro residues. Ser-1089 carries the phosphoserine modification. The residue at position 1098 (Ser-1098) is a Phosphoserine; by PLK1. Residues 1110–1198 (LQVSQPPDPH…TSPGQAQPLV (89 aa)) form a disordered region. The segment covering 1139-1154 (ETFSSTTTVTPVSPSF) has biased composition (low complexity). Thr-1148 carries the post-translational modification Phosphothreonine. 5 positions are modified to phosphoserine: Ser-1151, Ser-1163, Ser-1165, Ser-1175, and Ser-1190. Positions 1163-1179 (SASVENVSLRKSSEGSS) are enriched in polar residues. Residue Tyr-1242 is modified to Phosphotyrosine; by INSR. The interval 1251 to 1275 (QGSLAQSQPQPGDKNSWSRTRSLGG) is disordered. Positions 1253–1271 (SLAQSQPQPGDKNSWSRTR) are enriched in polar residues. Tyr-1303 carries the post-translational modification Phosphotyrosine; by INSR. Lys-1314 is covalently cross-linked (Glycyl lysine isopeptide (Lys-Gly) (interchain with G-Cter in ubiquitin)).

As to quaternary structure, interacts with PHIP. Interacts with SH2B1; this interaction enhances leptin-induced activation of the PI3-kinase pathway. Interacts with GRB2. Interacts with PIK3R1. Interacts with DVL2; this interaction promotes the Wnt/beta-catenin signaling pathway. Post-translationally, phosphorylation fluctuates in a cell-cycle dependent manner with hyperphosphorylation during mitosis. Phosphorylated at Ser-556 and Ser-1098 by PLK1; these phosphorylations prevent the activation of the PI3K pathway upon growth factor stimulation by inhibiting the binding between IRS2 and the PI3K pathway components and increasing the level of IRS2 protein degradation. In addition, they prevent premature mitotic exit. In terms of processing, monoubiquitinated by NEDD4; leading to enhanced IGF1 signaling. During cell cycle, ubiquitination and proteasomal degradation are controlled by FZR1. In terms of tissue distribution, skeletal muscle, lung, brain, liver, kidney, heart and spleen.

The protein resides in the cytoplasm. The protein localises to the cytosol. Its function is as follows. Signaling adapter protein that participates in the signal transduction from two prominent receptor tyrosine kinases, insulin receptor/INSR and insulin-like growth factor I receptor/IGF1R. Plays therefore an important role in development, growth, glucose homeostasis as well as lipid metabolism. Upon phosphorylation by the insulin receptor, functions as a signaling scaffold that propagates insulin action through binding to SH2 domain-containing proteins including the p85 regulatory subunit of PI3K, NCK1, NCK2, GRB2 or SHP2. Recruitment of GRB2 leads to the activation of the guanine nucleotide exchange factor SOS1 which in turn triggers the Ras/Raf/MEK/MAPK signaling cascade. Activation of the PI3K/AKT pathway is responsible for most of insulin metabolic effects in the cell, and the Ras/Raf/MEK/MAPK is involved in the regulation of gene expression and in cooperation with the PI3K pathway regulates cell growth and differentiation. Acts a positive regulator of the Wnt/beta-catenin signaling pathway through suppression of DVL2 autophagy-mediated degradation leading to cell proliferation. Plays a role in cell cycle progression by promoting a robust spindle assembly checkpoint (SAC) during M-phase. In macrophages, IL4-induced tyrosine phosphorylation of IRS2 leads to the recruitment and activation of phosphoinositide 3-kinase (PI3K). The sequence is that of Insulin receptor substrate 2 (Irs2) from Mus musculus (Mouse).